The following is a 435-amino-acid chain: GTPase Der (435 aa).

EngA-type G domains are found at residues 3–167 and 176–351; these read NIVA…KDEG and PRIA…ENRG. Residues 9-16, 56-60, 119-122, 182-189, 229-233, and 294-297 each bind GTP; these read GRPNVGKS, DTGGY, NKSD, GRPNAGKS, DTAGI, and NKWD. In terms of domain architecture, KH-like spans 352-435; the sequence is KRIPTSELND…VPISIVYRKK (84 aa).

It belongs to the TRAFAC class TrmE-Era-EngA-EngB-Septin-like GTPase superfamily. EngA (Der) GTPase family. In terms of assembly, associates with the 50S ribosomal subunit.

Its function is as follows. GTPase that plays an essential role in the late steps of ribosome biogenesis. The polypeptide is GTPase Der (Cytophaga hutchinsonii (strain ATCC 33406 / DSM 1761 / CIP 103989 / NBRC 15051 / NCIMB 9469 / D465)).